Reading from the N-terminus, the 287-residue chain is Pantothenate synthetase (287 aa).

An ATP-binding site is contributed by 30-37 (MGYLHEGH). His37 serves as the catalytic Proton donor. Gln61 contributes to the (R)-pantoate binding site. Beta-alanine is bound at residue Gln61. 150–153 (GMKD) is a binding site for ATP. Residue Gln156 participates in (R)-pantoate binding. ATP-binding positions include Val179 and 187–190 (LSSR).

It belongs to the pantothenate synthetase family. As to quaternary structure, homodimer.

It localises to the cytoplasm. It catalyses the reaction (R)-pantoate + beta-alanine + ATP = (R)-pantothenate + AMP + diphosphate + H(+). It functions in the pathway cofactor biosynthesis; (R)-pantothenate biosynthesis; (R)-pantothenate from (R)-pantoate and beta-alanine: step 1/1. In terms of biological role, catalyzes the condensation of pantoate with beta-alanine in an ATP-dependent reaction via a pantoyl-adenylate intermediate. This Coprothermobacter proteolyticus (strain ATCC 35245 / DSM 5265 / OCM 4 / BT) protein is Pantothenate synthetase.